A 378-amino-acid polypeptide reads, in one-letter code: Succinyl-diaminopimelate desuccinylase (378 aa).

His-68 is a Zn(2+) binding site. The active site involves Asp-70. Asp-102 contacts Zn(2+). The active-site Proton acceptor is Glu-136. Residues Glu-137, Glu-165, and His-351 each contribute to the Zn(2+) site.

Belongs to the peptidase M20A family. DapE subfamily. As to quaternary structure, homodimer. Requires Zn(2+) as cofactor. The cofactor is Co(2+).

It catalyses the reaction N-succinyl-(2S,6S)-2,6-diaminopimelate + H2O = (2S,6S)-2,6-diaminopimelate + succinate. The protein operates within amino-acid biosynthesis; L-lysine biosynthesis via DAP pathway; LL-2,6-diaminopimelate from (S)-tetrahydrodipicolinate (succinylase route): step 3/3. Functionally, catalyzes the hydrolysis of N-succinyl-L,L-diaminopimelic acid (SDAP), forming succinate and LL-2,6-diaminopimelate (DAP), an intermediate involved in the bacterial biosynthesis of lysine and meso-diaminopimelic acid, an essential component of bacterial cell walls. This Pseudomonas syringae pv. syringae protein is Succinyl-diaminopimelate desuccinylase.